A 473-amino-acid chain; its full sequence is Ribulose bisphosphate carboxylase large chain (473 aa).

The tract at residues 1–136 is necessary and sufficient to target proteins to carboxysomes, interacts with shell proteins; that stretch reads MAVKKYSAGV…RLEDVRFPLA (136 aa). Positions 116 and 166 each coordinate substrate. Residue Lys168 is the Proton acceptor of the active site. A substrate-binding site is contributed by Lys170. Mg(2+) is bound by residues Lys194, Asp196, and Glu197. N6-carboxylysine is present on Lys194. Catalysis depends on His287, which acts as the Proton acceptor. Positions 288, 320, and 372 each coordinate substrate.

This sequence belongs to the RuBisCO large chain family. Type I subfamily. As to quaternary structure, heterohexadecamer of 8 large chains and 8 small chains. Forms a CsoS2-CsoS1-RuBisCO complex. The N-terminus (residues 1-136) interacts with shell proteins CsoS1A, CsoS1B and CsoS1C. Holo-RuBisCO interacts with the N-terminal repeats of CsoS2; binding is sensitive to ionic strength. A fusion of a single N-terminal repeat to the C-terminus of the large subunit of RuBisCO (cbbL) shows the repeat can lie between a CbbL dimer, making minor contacts to CbbS; thus each RuBisCO holoenzyme could bind 8 repeats. Mg(2+) serves as cofactor.

It localises to the carboxysome. The catalysed reaction is 2 (2R)-3-phosphoglycerate + 2 H(+) = D-ribulose 1,5-bisphosphate + CO2 + H2O. It catalyses the reaction D-ribulose 1,5-bisphosphate + O2 = 2-phosphoglycolate + (2R)-3-phosphoglycerate + 2 H(+). RuBisCO catalyzes two reactions: the carboxylation of D-ribulose 1,5-bisphosphate, the primary event in carbon dioxide fixation, as well as the oxidative fragmentation of the pentose substrate. Both reactions occur simultaneously and in competition at the same active site. There are estimated to be 270 RuBisCO heterohexadecamers per carboxysome. Functionally, alpha-carboxysomes are able to assemble in the absence of RuBisCO, unlike beta-carboxysomes. The RuBisCO large subunit is required for enzyme integration into carboxysomes; replacing it with the carboxysomally targeted gene (Tcr_0838, AC Q31HD9) of H.crungenus places RuBisCO in the carboxysome, while the non-carboxysomal large subunit of H.crungenus (Tcr_0427, AC Q31IK0) is not incorporated in the carboxysome. This is Ribulose bisphosphate carboxylase large chain from Halothiobacillus neapolitanus (strain ATCC 23641 / c2) (Thiobacillus neapolitanus).